The following is a 550-amino-acid chain: (+)-germacrene D synthase (550 aa).

The Mg(2+) site is built by Asp-304, Asp-308, and Glu-455. Positions 304-308 (DDIYD) match the DDXXD motif motif.

This sequence belongs to the terpene synthase family. Tpsa subfamily. The cofactor is Mg(2+). Mn(2+) serves as cofactor. Requires Co(2+) as cofactor. It depends on Ni(2+) as a cofactor.

The protein resides in the cytoplasm. The catalysed reaction is (2E,6E)-farnesyl diphosphate = (+)-germacrene D + diphosphate. It participates in secondary metabolite biosynthesis; terpenoid biosynthesis. In terms of biological role, involved in the biosynthesis of germacrene D. Can use farnesyl diphosphate as substrate, but not geranyl diphosphate. Produces mainly (+)-germacrene D along with germacrene B and a number of minor by-products. The protein is (+)-germacrene D synthase of Zingiber officinale (Ginger).